The primary structure comprises 485 residues: Glutamate--tRNA ligase (485 aa).

A 'HIGH' region motif is present at residues proline 10 to asparagine 20. Residues lysine 253–arginine 257 carry the 'KMSKS' region motif. ATP is bound at residue lysine 256.

This sequence belongs to the class-I aminoacyl-tRNA synthetase family. Glutamate--tRNA ligase type 1 subfamily. In terms of assembly, monomer.

It localises to the cytoplasm. The catalysed reaction is tRNA(Glu) + L-glutamate + ATP = L-glutamyl-tRNA(Glu) + AMP + diphosphate. Functionally, catalyzes the attachment of glutamate to tRNA(Glu) in a two-step reaction: glutamate is first activated by ATP to form Glu-AMP and then transferred to the acceptor end of tRNA(Glu). This chain is Glutamate--tRNA ligase, found in Enterococcus faecalis (strain ATCC 700802 / V583).